The sequence spans 207 residues: NADH-quinone oxidoreductase subunit C (207 aa).

This sequence belongs to the complex I 30 kDa subunit family. In terms of assembly, NDH-1 is composed of 14 different subunits. Subunits NuoB, C, D, E, F, and G constitute the peripheral sector of the complex.

It localises to the cell inner membrane. It carries out the reaction a quinone + NADH + 5 H(+)(in) = a quinol + NAD(+) + 4 H(+)(out). NDH-1 shuttles electrons from NADH, via FMN and iron-sulfur (Fe-S) centers, to quinones in the respiratory chain. The immediate electron acceptor for the enzyme in this species is believed to be ubiquinone. Couples the redox reaction to proton translocation (for every two electrons transferred, four hydrogen ions are translocated across the cytoplasmic membrane), and thus conserves the redox energy in a proton gradient. The chain is NADH-quinone oxidoreductase subunit C from Bordetella pertussis (strain Tohama I / ATCC BAA-589 / NCTC 13251).